The following is a 246-amino-acid chain: UPF0309 protein OB3413 (246 aa).

The SIS domain occupies 33 to 212 (MATAVMNGNS…VLKMIEIFEE (180 aa)).

This sequence belongs to the UPF0309 family.

The polypeptide is UPF0309 protein OB3413 (Oceanobacillus iheyensis (strain DSM 14371 / CIP 107618 / JCM 11309 / KCTC 3954 / HTE831)).